The primary structure comprises 694 residues: Soluble starch synthase 2-2, chloroplastic/amyloplastic (694 aa).

Residues 1 to 15 constitute a chloroplast transit peptide; the sequence is MSGAIASSPAATLFL. The tract at residues 93-197 is disordered; it reads KADHVEDSVS…DSENKESGPL (105 aa). Low complexity predominate over residues 127 to 142; it reads APVSKPKVDPSVPASK. Positions 156–176 are enriched in basic and acidic residues; it reads AALDKKEDVGVAEPLEAKADA. The span at 177-186 shows a compositional bias: low complexity; it reads GGDAGAVSSA. Lys217 is an ADP-alpha-D-glucose binding site.

Belongs to the glycosyltransferase 1 family. Bacterial/plant glycogen synthase subfamily. In terms of tissue distribution, expressed in leaves and weakly in endosperm and roots.

It localises to the plastid. It is found in the amyloplast. Its subcellular location is the chloroplast. It catalyses the reaction [(1-&gt;4)-alpha-D-glucosyl](n) + ADP-alpha-D-glucose = [(1-&gt;4)-alpha-D-glucosyl](n+1) + ADP + H(+). It participates in glycan biosynthesis; starch biosynthesis. May contribute to the deposition of transient starch in chloroplasts of leaves. In Oryza sativa subsp. japonica (Rice), this protein is Soluble starch synthase 2-2, chloroplastic/amyloplastic (SSII-2).